Consider the following 249-residue polypeptide: Triosephosphate isomerase (249 aa).

12-14 (NWK) serves as a coordination point for substrate. The Electrophile role is filled by H96. Catalysis depends on E166, which acts as the Proton acceptor. Substrate-binding positions include G172, S211, and 232 to 233 (GG).

The protein belongs to the triosephosphate isomerase family. Homodimer.

Its subcellular location is the cytoplasm. It carries out the reaction D-glyceraldehyde 3-phosphate = dihydroxyacetone phosphate. The protein operates within carbohydrate biosynthesis; gluconeogenesis. It participates in carbohydrate degradation; glycolysis; D-glyceraldehyde 3-phosphate from glycerone phosphate: step 1/1. Involved in the gluconeogenesis. Catalyzes stereospecifically the conversion of dihydroxyacetone phosphate (DHAP) to D-glyceraldehyde-3-phosphate (G3P). The chain is Triosephosphate isomerase from Xanthobacter flavus.